A 101-amino-acid chain; its full sequence is Small ribosomal subunit protein uS14 (101 aa).

This sequence belongs to the universal ribosomal protein uS14 family. As to quaternary structure, part of the 30S ribosomal subunit. Contacts proteins S3 and S10.

Its function is as follows. Binds 16S rRNA, required for the assembly of 30S particles and may also be responsible for determining the conformation of the 16S rRNA at the A site. This Citrobacter koseri (strain ATCC BAA-895 / CDC 4225-83 / SGSC4696) protein is Small ribosomal subunit protein uS14.